The primary structure comprises 200 residues: ATP-dependent Clp protease proteolytic subunit (200 aa).

Serine 98 functions as the Nucleophile in the catalytic mechanism. Histidine 123 is an active-site residue.

The protein belongs to the peptidase S14 family. In terms of assembly, fourteen ClpP subunits assemble into 2 heptameric rings which stack back to back to give a disk-like structure with a central cavity, resembling the structure of eukaryotic proteasomes.

It localises to the cytoplasm. The enzyme catalyses Hydrolysis of proteins to small peptides in the presence of ATP and magnesium. alpha-casein is the usual test substrate. In the absence of ATP, only oligopeptides shorter than five residues are hydrolyzed (such as succinyl-Leu-Tyr-|-NHMec, and Leu-Tyr-Leu-|-Tyr-Trp, in which cleavage of the -Tyr-|-Leu- and -Tyr-|-Trp bonds also occurs).. Its function is as follows. Cleaves peptides in various proteins in a process that requires ATP hydrolysis. Has a chymotrypsin-like activity. Plays a major role in the degradation of misfolded proteins. The chain is ATP-dependent Clp protease proteolytic subunit from Deinococcus geothermalis (strain DSM 11300 / CIP 105573 / AG-3a).